A 114-amino-acid polypeptide reads, in one-letter code: MPIFTFSTNVPSENISVDFLKSTSKLIAGMLGKPESYVAVHINGGQKITFGGTDAPAGFGQLLSLGGVGGEKNRSHSAKLFKHLTDGLGIPGNRMYINFVDMRGSDVGYNGSTF.

Proline 2 serves as the catalytic Proton acceptor; via imino nitrogen. Lysine 33 and asparagine 98 together coordinate substrate.

Belongs to the MIF family.

Its subcellular location is the secreted. It catalyses the reaction L-dopachrome = 5,6-dihydroxyindole-2-carboxylate. The enzyme catalyses 3-phenylpyruvate = enol-phenylpyruvate. Tautomerization of the methyl ester of L-dopachrome. Inhibits migration of human peripheral blood mononuclear cells. The protein is Macrophage migration inhibitory factor homolog of Trichuris trichiura (Whipworm).